Here is a 475-residue protein sequence, read N- to C-terminus: 3-isopropylmalate dehydratase large subunit (475 aa).

3 residues coordinate [4Fe-4S] cluster: cysteine 349, cysteine 409, and cysteine 412.

It belongs to the aconitase/IPM isomerase family. LeuC type 1 subfamily. In terms of assembly, heterodimer of LeuC and LeuD. The cofactor is [4Fe-4S] cluster.

It catalyses the reaction (2R,3S)-3-isopropylmalate = (2S)-2-isopropylmalate. The protein operates within amino-acid biosynthesis; L-leucine biosynthesis; L-leucine from 3-methyl-2-oxobutanoate: step 2/4. Functionally, catalyzes the isomerization between 2-isopropylmalate and 3-isopropylmalate, via the formation of 2-isopropylmaleate. The sequence is that of 3-isopropylmalate dehydratase large subunit from Cereibacter sphaeroides (strain ATCC 17029 / ATH 2.4.9) (Rhodobacter sphaeroides).